We begin with the raw amino-acid sequence, 590 residues long: Myo-inositol transporter 3A (590 aa).

Residues 1–57 (MSATHIENRDDSFLENKGIDHIGRPENNNGSQEPPSPSGFGGHLIDENLVRVEGEDK) lie on the Cytoplasmic side of the membrane. Over residues 15–24 (ENKGIDHIGR) the composition is skewed to basic and acidic residues. The interval 15-40 (ENKGIDHIGRPENNNGSQEPPSPSGF) is disordered. A helical membrane pass occupies residues 58-78 (VTWYLCFLISASAIAGFLFGY). Topologically, residues 79-105 (DTGVVGVALPLVGTDLGGSALNSSQQE) are extracellular. An N-linked (GlcNAc...) asparagine glycan is attached at Asn-100. A helical transmembrane segment spans residues 106-126 (IITAGTTIGAIFGSAILGGWG). Over 127–132 (DRLGRK) the chain is Cytoplasmic. The chain crosses the membrane as a helical span at residues 133–153 (GAILVSDVFFTIGAVIIASSY). At 154-157 (SVPQ) the chain is on the extracellular side. The chain crosses the membrane as a helical span at residues 158–178 (IIVGRIILGIGVGGAAVIAPL). The Cytoplasmic portion of the chain corresponds to 179–192 (FITETAPTAVRGRC). A helical membrane pass occupies residues 193–213 (IGVNAFFIPFGQVVSDAIGAG). Residues 214-222 (VQNMHNGWR) lie on the Extracellular side of the membrane. Residues 223-243 (LLFALGAVPSLLQLLLFHYLP) traverse the membrane as a helical segment. Residues 244-325 (ESPRILILKG…AVSALQAAGQ (82 aa)) lie on the Cytoplasmic side of the membrane. A helical transmembrane segment spans residues 326–346 (LTGFNTLLYYAGTLFGLLGLS). Over 347 to 349 (NPA) the chain is Extracellular. Residues 350–370 (LGGLIPAGTNAVFVLIGMSLV) traverse the membrane as a helical segment. The Cytoplasmic portion of the chain corresponds to 371–376 (DKVGRR). The helical transmembrane segment at 377–397 (GLLLIGVPIMLLGHVWNIVSF) threads the bilayer. Residues 398-420 (YYMCKPTGGFLDTSYSYDTTDVG) are Extracellular-facing. A helical transmembrane segment spans residues 421–441 (IVIGGIVFFVVGYGLTYSHLV). The Cytoplasmic segment spans residues 442 to 455 (WYQAEYLTLEVRSM). A helical membrane pass occupies residues 456-476 (GSGIATTVCWIANLVVSVSYL). The Extracellular segment spans residues 477-485 (SELETMTPS). The helical transmembrane segment at 486–506 (GTYGFYFGISVIGFVFLVFCL) threads the bilayer. At 507 to 590 (PETKQLSIDE…GGKRTPSASV (84 aa)) the chain is on the cytoplasmic side.

It belongs to the major facilitator superfamily. Sugar transporter (TC 2.A.1.1) family.

Its subcellular location is the cell membrane. It catalyses the reaction myo-inositol(out) + H(+)(out) = myo-inositol(in) + H(+)(in). In terms of biological role, transporter for myo-inositol. This Cryptococcus neoformans var. grubii serotype A (strain H99 / ATCC 208821 / CBS 10515 / FGSC 9487) (Filobasidiella neoformans var. grubii) protein is Myo-inositol transporter 3A (ITR3A).